A 238-amino-acid chain; its full sequence is Uridylate kinase (238 aa).

10–13 (KFSG) lines the ATP pocket. The tract at residues 18–23 (GENGFG) is involved in allosteric activation by GTP. Position 52 (Gly52) interacts with UMP. ATP-binding residues include Gly53 and Arg57. UMP is bound by residues Asp73 and 134–141 (TGNPFFTT). Positions 161, 167, and 170 each coordinate ATP.

The protein belongs to the UMP kinase family. As to quaternary structure, homohexamer.

The protein localises to the cytoplasm. It carries out the reaction UMP + ATP = UDP + ADP. It functions in the pathway pyrimidine metabolism; CTP biosynthesis via de novo pathway; UDP from UMP (UMPK route): step 1/1. With respect to regulation, allosterically activated by GTP. Inhibited by UTP. Catalyzes the reversible phosphorylation of UMP to UDP. This is Uridylate kinase from Campylobacter concisus (strain 13826).